Reading from the N-terminus, the 405-residue chain is Acetylornithine aminotransferase 1 (405 aa).

Residues 103–104 and phenylalanine 136 each bind pyridoxal 5'-phosphate; that span reads GA. Residue arginine 139 coordinates N(2)-acetyl-L-ornithine. 221–224 lines the pyridoxal 5'-phosphate pocket; the sequence is DEVQ. Lysine 250 bears the N6-(pyridoxal phosphate)lysine mark. N(2)-acetyl-L-ornithine is bound at residue serine 278. Residue threonine 279 participates in pyridoxal 5'-phosphate binding.

This sequence belongs to the class-III pyridoxal-phosphate-dependent aminotransferase family. ArgD subfamily. As to quaternary structure, homodimer. The cofactor is pyridoxal 5'-phosphate.

It localises to the cytoplasm. The catalysed reaction is N(2)-acetyl-L-ornithine + 2-oxoglutarate = N-acetyl-L-glutamate 5-semialdehyde + L-glutamate. It functions in the pathway amino-acid biosynthesis; L-arginine biosynthesis; N(2)-acetyl-L-ornithine from L-glutamate: step 4/4. The chain is Acetylornithine aminotransferase 1 from Bradyrhizobium diazoefficiens (strain JCM 10833 / BCRC 13528 / IAM 13628 / NBRC 14792 / USDA 110).